A 168-amino-acid polypeptide reads, in one-letter code: UPF0262 protein BBta_0898 (168 aa).

It belongs to the UPF0262 family.

The chain is UPF0262 protein BBta_0898 from Bradyrhizobium sp. (strain BTAi1 / ATCC BAA-1182).